Consider the following 427-residue polypeptide: UDP-N-acetylglucosamine--N-acetylmuramyl-(pentapeptide) pyrophosphoryl-undecaprenol N-acetylglucosamine transferase (427 aa).

Residues 29–31 (TGG), Asn-141, Arg-177, Ser-205, Ile-258, and Gln-303 each bind UDP-N-acetyl-alpha-D-glucosamine. A disordered region spans residues 408–427 (SLHPIPDSRFPIRTSAGGAQ).

It belongs to the glycosyltransferase 28 family. MurG subfamily.

It is found in the cell inner membrane. The catalysed reaction is di-trans,octa-cis-undecaprenyl diphospho-N-acetyl-alpha-D-muramoyl-L-alanyl-D-glutamyl-meso-2,6-diaminopimeloyl-D-alanyl-D-alanine + UDP-N-acetyl-alpha-D-glucosamine = di-trans,octa-cis-undecaprenyl diphospho-[N-acetyl-alpha-D-glucosaminyl-(1-&gt;4)]-N-acetyl-alpha-D-muramoyl-L-alanyl-D-glutamyl-meso-2,6-diaminopimeloyl-D-alanyl-D-alanine + UDP + H(+). The protein operates within cell wall biogenesis; peptidoglycan biosynthesis. Functionally, cell wall formation. Catalyzes the transfer of a GlcNAc subunit on undecaprenyl-pyrophosphoryl-MurNAc-pentapeptide (lipid intermediate I) to form undecaprenyl-pyrophosphoryl-MurNAc-(pentapeptide)GlcNAc (lipid intermediate II). The sequence is that of UDP-N-acetylglucosamine--N-acetylmuramyl-(pentapeptide) pyrophosphoryl-undecaprenol N-acetylglucosamine transferase from Xanthomonas campestris pv. campestris (strain 8004).